We begin with the raw amino-acid sequence, 111 residues long: DNA-binding protein MTH_1615 (111 aa).

The protein belongs to the PDCD5 family.

Functionally, DNA-binding protein which can interact with a randomly chosen 20-mer of double-stranded DNA. The polypeptide is DNA-binding protein MTH_1615 (Methanothermobacter thermautotrophicus (strain ATCC 29096 / DSM 1053 / JCM 10044 / NBRC 100330 / Delta H) (Methanobacterium thermoautotrophicum)).